The primary structure comprises 552 residues: Steroid transmembrane transporter SLC22A24 (552 aa).

Transmembrane regions (helical) follow at residues 16 to 36 (FQILQTAFFCICILIAYPHML), 144 to 164 (LISVAQSLFMVAQLLGGLIFG), 178 to 198 (CCLLLFAISGTCAAIAPTFPV), 204 to 224 (FLGGICLMNIITNAVSTMSEW), 235 to 255 (GIILNSCNIGQILMGGLGFVI), 267 to 287 (IPLFILFLFSRSVLESAQWLI), 350 to 370 (IFYLSFVRFAATIPFLGLMLN), 378 to 398 (IFLFQIIFGAVTFIVRCAVLL), 407 to 427 (ISQMVSSFLVGIPILVNIFLS), 435 to 455 (VALATLGIGATTAIFTTHTVH), 469 to 489 (IGLNAMFSRLGATLAPLLMIL), and 496 to 516 (LPWIIYGVSSILAGLVVLLLP). The tract at residues 524 to 552 (PNTIQDVENNRRDSRKTKQEDISMKVTQF) is disordered. Residues 531 to 546 (ENNRRDSRKTKQEDIS) show a composition bias toward basic and acidic residues.

The protein belongs to the major facilitator (TC 2.A.1) superfamily. Organic cation transporter (TC 2.A.1.19) family.

The protein resides in the cell membrane. It carries out the reaction estrone 3-sulfate(out) + glutarate(in) = estrone 3-sulfate(in) + glutarate(out). The enzyme catalyses 17beta-estradiol 17-O-(beta-D-glucuronate)(out) + glutarate(in) = 17beta-estradiol 17-O-(beta-D-glucuronate)(in) + glutarate(out). The catalysed reaction is taurocholate(out) + glutarate(in) = taurocholate(in) + glutarate(out). It catalyses the reaction glycocholate(out) + glutarate(in) = glycocholate(in) + glutarate(out). It carries out the reaction dehydroepiandrosterone 3-sulfate(out) + glutarate(in) = dehydroepiandrosterone 3-sulfate(in) + glutarate(out). The enzyme catalyses glutarate(in) + succinate(out) = glutarate(out) + succinate(in). Functionally, renal transmembrane organic anion/dicarboxylate exchanger that participates in the reabsorption of conjugated steroids, as well as bile acids, driven by an outward gradient of dicarboxylates such as glutarate or succinate. Transports taurocholate, estrone 3-sulfate, and estradiol-17-glucuronide (17beta-estradiol 17-O-(beta-D-glucuronate)), but not androstanediol glucuronide (5alpha-androstane-3alpha,17beta-diol 3-O-(beta-D-glucuronate)). The sequence is that of Steroid transmembrane transporter SLC22A24 from Equus caballus (Horse).